The primary structure comprises 513 residues: tRNA-2-methylthio-N(6)-dimethylallyladenosine synthase (513 aa).

One can recognise an MTTase N-terminal domain in the interval 67-185 (KTFLIKTYGC…LPEILEEAYL (119 aa)). 6 residues coordinate [4Fe-4S] cluster: Cys-76, Cys-112, Cys-146, Cys-222, Cys-226, and Cys-229. The Radical SAM core domain occupies 208–438 (REGNIKAWVN…NKKVACYSER (231 aa)). The TRAM domain occupies 441 to 504 (QQYEGQTVQV…QFSLNGTFIS (64 aa)).

This sequence belongs to the methylthiotransferase family. MiaB subfamily. As to quaternary structure, monomer. It depends on [4Fe-4S] cluster as a cofactor.

It is found in the cytoplasm. It catalyses the reaction N(6)-dimethylallyladenosine(37) in tRNA + (sulfur carrier)-SH + AH2 + 2 S-adenosyl-L-methionine = 2-methylsulfanyl-N(6)-dimethylallyladenosine(37) in tRNA + (sulfur carrier)-H + 5'-deoxyadenosine + L-methionine + A + S-adenosyl-L-homocysteine + 2 H(+). Catalyzes the methylthiolation of N6-(dimethylallyl)adenosine (i(6)A), leading to the formation of 2-methylthio-N6-(dimethylallyl)adenosine (ms(2)i(6)A) at position 37 in tRNAs that read codons beginning with uridine. The polypeptide is tRNA-2-methylthio-N(6)-dimethylallyladenosine synthase (Staphylococcus saprophyticus subsp. saprophyticus (strain ATCC 15305 / DSM 20229 / NCIMB 8711 / NCTC 7292 / S-41)).